The following is a 404-amino-acid chain: Argininosuccinate synthase (404 aa).

ATP is bound by residues 12–20 (AYSGGLDTS) and Ala-39. L-citrulline-binding residues include Tyr-91 and Ser-96. Gly-121 is a binding site for ATP. Thr-123, Asn-127, and Asp-128 together coordinate L-aspartate. Asn-127 serves as a coordination point for L-citrulline. Residues Arg-131, Ser-180, Ser-189, Glu-265, and Tyr-277 each contribute to the L-citrulline site.

Belongs to the argininosuccinate synthase family. Type 1 subfamily. Homotetramer.

The protein localises to the cytoplasm. It catalyses the reaction L-citrulline + L-aspartate + ATP = 2-(N(omega)-L-arginino)succinate + AMP + diphosphate + H(+). It participates in amino-acid biosynthesis; L-arginine biosynthesis; L-arginine from L-ornithine and carbamoyl phosphate: step 2/3. This Vibrio cholerae serotype O1 (strain ATCC 39541 / Classical Ogawa 395 / O395) protein is Argininosuccinate synthase.